A 280-amino-acid chain; its full sequence is Sulfur carrier protein FdhD (280 aa).

Residue cysteine 121 is the Cysteine persulfide intermediate of the active site. 258 to 263 (FSRPGR) lines the Mo-bis(molybdopterin guanine dinucleotide) pocket.

The protein belongs to the FdhD family.

It is found in the cytoplasm. Functionally, required for formate dehydrogenase (FDH) activity. Acts as a sulfur carrier protein that transfers sulfur from IscS to the molybdenum cofactor prior to its insertion into FDH. This Cronobacter sakazakii (strain ATCC BAA-894) (Enterobacter sakazakii) protein is Sulfur carrier protein FdhD.